The chain runs to 228 residues: 7-cyano-7-deazaguanine synthase (228 aa).

Leu7–Thr17 lines the ATP pocket. Zn(2+) is bound by residues Cys187, Cys195, Cys198, and Cys201.

This sequence belongs to the QueC family. Requires Zn(2+) as cofactor.

The catalysed reaction is 7-carboxy-7-deazaguanine + NH4(+) + ATP = 7-cyano-7-deazaguanine + ADP + phosphate + H2O + H(+). The protein operates within purine metabolism; 7-cyano-7-deazaguanine biosynthesis. In terms of biological role, catalyzes the ATP-dependent conversion of 7-carboxy-7-deazaguanine (CDG) to 7-cyano-7-deazaguanine (preQ(0)). In Chlorobium chlorochromatii (strain CaD3), this protein is 7-cyano-7-deazaguanine synthase.